We begin with the raw amino-acid sequence, 564 residues long: Dihydroxy-acid dehydratase (564 aa).

C50 contacts [2Fe-2S] cluster. D82 is a binding site for Mg(2+). C123 serves as a coordination point for [2Fe-2S] cluster. D124 and K125 together coordinate Mg(2+). The residue at position 125 (K125) is an N6-carboxylysine. C195 lines the [2Fe-2S] cluster pocket. Residue E447 participates in Mg(2+) binding. Catalysis depends on S473, which acts as the Proton acceptor.

It belongs to the IlvD/Edd family. As to quaternary structure, homodimer. [2Fe-2S] cluster is required as a cofactor. The cofactor is Mg(2+).

The catalysed reaction is (2R)-2,3-dihydroxy-3-methylbutanoate = 3-methyl-2-oxobutanoate + H2O. It catalyses the reaction (2R,3R)-2,3-dihydroxy-3-methylpentanoate = (S)-3-methyl-2-oxopentanoate + H2O. Its pathway is amino-acid biosynthesis; L-isoleucine biosynthesis; L-isoleucine from 2-oxobutanoate: step 3/4. The protein operates within amino-acid biosynthesis; L-valine biosynthesis; L-valine from pyruvate: step 3/4. In terms of biological role, functions in the biosynthesis of branched-chain amino acids. Catalyzes the dehydration of (2R,3R)-2,3-dihydroxy-3-methylpentanoate (2,3-dihydroxy-3-methylvalerate) into 2-oxo-3-methylpentanoate (2-oxo-3-methylvalerate) and of (2R)-2,3-dihydroxy-3-methylbutanoate (2,3-dihydroxyisovalerate) into 2-oxo-3-methylbutanoate (2-oxoisovalerate), the penultimate precursor to L-isoleucine and L-valine, respectively. This chain is Dihydroxy-acid dehydratase, found in Chloroflexus aggregans (strain MD-66 / DSM 9485).